The following is a 63-amino-acid chain: Conotoxin Cl14.11 (63 aa).

The signal sequence occupies residues 1 to 21 (MRFLLLLTVALLLTCIMETDA). Positions 22–34 (EAKPEDLAERFRE) are excised as a propeptide.

In terms of processing, contains 2 disulfide bond. In terms of tissue distribution, expressed by the venom duct.

It is found in the secreted. The protein is Conotoxin Cl14.11 of Californiconus californicus (California cone).